Consider the following 61-residue polypeptide: MANTSKVVKAARGHKFAVQNYNRCSRCGRARGYYRFFGMCRICIRELAHKGELPGVKKASW.

The Zn(2+) site is built by C24, C27, C40, and C43.

It belongs to the universal ribosomal protein uS14 family. Zinc-binding uS14 subfamily. Part of the 30S ribosomal subunit. Contacts proteins S3 and S10. The cofactor is Zn(2+).

Binds 16S rRNA, required for the assembly of 30S particles and may also be responsible for determining the conformation of the 16S rRNA at the A site. The polypeptide is Small ribosomal subunit protein uS14 (Deinococcus geothermalis (strain DSM 11300 / CIP 105573 / AG-3a)).